Reading from the N-terminus, the 282-residue chain is Bifunctional protein FolD (282 aa).

NADP(+) contacts are provided by residues 165-167 (NRS), Ser190, and Ile231.

Belongs to the tetrahydrofolate dehydrogenase/cyclohydrolase family. Homodimer.

The catalysed reaction is (6R)-5,10-methylene-5,6,7,8-tetrahydrofolate + NADP(+) = (6R)-5,10-methenyltetrahydrofolate + NADPH. It catalyses the reaction (6R)-5,10-methenyltetrahydrofolate + H2O = (6R)-10-formyltetrahydrofolate + H(+). Its pathway is one-carbon metabolism; tetrahydrofolate interconversion. In terms of biological role, catalyzes the oxidation of 5,10-methylenetetrahydrofolate to 5,10-methenyltetrahydrofolate and then the hydrolysis of 5,10-methenyltetrahydrofolate to 10-formyltetrahydrofolate. The sequence is that of Bifunctional protein FolD from Clostridium botulinum (strain 657 / Type Ba4).